A 328-amino-acid chain; its full sequence is tRNA methyltransferase 10 homolog A (328 aa).

2 disordered regions span residues 1-91 (MSSE…RKRV) and 281-328 (HKAC…PVLQ). S22 bears the Phosphoserine mark. The stretch at 43–83 (RQLKKLMKQKQWEEQREQRKEKRKEKRKRKKLERRQLESNS) forms a coiled coil. Basic and acidic residues predominate over residues 52 to 62 (KQWEEQREQRK). The span at 63–75 (EKRKEKRKRKKLE) shows a compositional bias: basic residues. The SAM-dependent MTase TRM10-type domain occupies 88–278 (RKRVRRDVAR…TILPQRKGAV (191 aa)). Residues 305–319 (ESCRDNPDSPQKDEQ) show a composition bias toward basic and acidic residues.

Belongs to the class IV-like SAM-binding methyltransferase superfamily. TRM10 family. In terms of assembly, interacts with tRNA.

It localises to the nucleus. Its subcellular location is the nucleolus. It carries out the reaction guanosine(9) in tRNA + S-adenosyl-L-methionine = N(1)-methylguanosine(9) in tRNA + S-adenosyl-L-homocysteine + H(+). Its function is as follows. S-adenosyl-L-methionine-dependent guanine N(1)-methyltransferase that catalyzes the formation of N(1)-methylguanine at position 9 (m1G9) in tRNAs. Probably not able to catalyze formation of N(1)-methyladenine at position 9 (m1A9) in tRNAs. This Mus musculus (Mouse) protein is tRNA methyltransferase 10 homolog A (Trmt10a).